The primary structure comprises 342 residues: Isopentenyl-diphosphate delta-isomerase (342 aa).

11 to 12 (RK) lines the substrate pocket. Residues Ser-68, 69–71 (SMT), Ser-99, and Asn-127 each bind FMN. 99 to 101 (SMR) lines the substrate pocket. Gln-162 provides a ligand contact to substrate. Glu-163 serves as a coordination point for Mg(2+). FMN-binding positions include Lys-194, Thr-224, 274–276 (GLK), and 295–296 (AG).

It belongs to the IPP isomerase type 2 family. Homooctamer. Dimer of tetramers. FMN serves as cofactor. Requires NADPH as cofactor. Mg(2+) is required as a cofactor.

It localises to the cytoplasm. The catalysed reaction is isopentenyl diphosphate = dimethylallyl diphosphate. In terms of biological role, involved in the biosynthesis of isoprenoids. Catalyzes the 1,3-allylic rearrangement of the homoallylic substrate isopentenyl (IPP) to its allylic isomer, dimethylallyl diphosphate (DMAPP). The polypeptide is Isopentenyl-diphosphate delta-isomerase (Rickettsia peacockii (strain Rustic)).